The primary structure comprises 1223 residues: DNA-directed RNA polymerase subunit beta'' (1223 aa).

4 residues coordinate Zn(2+): cysteine 233, cysteine 307, cysteine 314, and cysteine 317.

Belongs to the RNA polymerase beta' chain family. RpoC2 subfamily. In plastids the minimal PEP RNA polymerase catalytic core is composed of four subunits: alpha, beta, beta', and beta''. When a (nuclear-encoded) sigma factor is associated with the core the holoenzyme is formed, which can initiate transcription. The cofactor is Zn(2+).

It localises to the plastid. Its subcellular location is the chloroplast. The enzyme catalyses RNA(n) + a ribonucleoside 5'-triphosphate = RNA(n+1) + diphosphate. Functionally, DNA-dependent RNA polymerase catalyzes the transcription of DNA into RNA using the four ribonucleoside triphosphates as substrates. The protein is DNA-directed RNA polymerase subunit beta'' of Mesostigma viride (Green alga).